The chain runs to 463 residues: Cysteine--tRNA ligase (463 aa).

A Zn(2+)-binding site is contributed by Cys-33. Positions Pro-35–Asn-45 match the 'HIGH' region motif. Zn(2+) contacts are provided by Cys-221, His-246, and Glu-250. The short motif at Lys-279 to Ser-283 is the 'KMSKS' region element. Residue Lys-282 participates in ATP binding.

It belongs to the class-I aminoacyl-tRNA synthetase family. In terms of assembly, monomer. Requires Zn(2+) as cofactor.

The protein resides in the cytoplasm. The enzyme catalyses tRNA(Cys) + L-cysteine + ATP = L-cysteinyl-tRNA(Cys) + AMP + diphosphate. This Rhizobium johnstonii (strain DSM 114642 / LMG 32736 / 3841) (Rhizobium leguminosarum bv. viciae) protein is Cysteine--tRNA ligase.